The primary structure comprises 35 residues: LNLVDQLGEADEELAGTYAELGDWCAQRILQHVQR.

Residues 1–21 (LNLVDQLGEADEELAGTYAEL) are leucine-zipper.

Belongs to the N-acylglucosamine 2-epimerase family. As to quaternary structure, homodimer. Forms a heterodimer with renin and inhibits its activity.

The enzyme catalyses an N-acyl-D-glucosamine = an N-acyl-D-mannosamine. Its pathway is amino-sugar metabolism; N-acetylneuraminate degradation. Its function is as follows. Catalyzes the interconversion of N-acetylglucosamine to N-acetylmannosamine. Involved in the N-glycolylneuraminic acid (Neu5Gc) degradation pathway. The polypeptide is N-acylglucosamine 2-epimerase (Canis lupus familiaris (Dog)).